Here is a 184-residue protein sequence, read N- to C-terminus: MKNVTDSFVSLGHWPYAGSFGFNTDILATNPINLSVVLGVLIFFGKGVLSDLLDNRKQRILSTIRNSEELRGAAIEQLEKARTRLRKVEIEADEFRVNGYSEIEREKSNLINAASENLERLENYKNETIRFEQQKAINQVRQRVFQQALQGALGTLNSCLNKELHLRAISSNISILGAMKEIMD.

A helical membrane pass occupies residues leucine 27–leucine 49.

Belongs to the ATPase B chain family. F-type ATPases have 2 components, F(1) - the catalytic core - and F(0) - the membrane proton channel. F(1) has five subunits: alpha(3), beta(3), gamma(1), delta(1), epsilon(1). F(0) has four main subunits: a(1), b(1), b'(1) and c(10-14). The alpha and beta chains form an alternating ring which encloses part of the gamma chain. F(1) is attached to F(0) by a central stalk formed by the gamma and epsilon chains, while a peripheral stalk is formed by the delta, b and b' chains.

It localises to the plastid. The protein localises to the chloroplast thylakoid membrane. F(1)F(0) ATP synthase produces ATP from ADP in the presence of a proton or sodium gradient. F-type ATPases consist of two structural domains, F(1) containing the extramembraneous catalytic core and F(0) containing the membrane proton channel, linked together by a central stalk and a peripheral stalk. During catalysis, ATP synthesis in the catalytic domain of F(1) is coupled via a rotary mechanism of the central stalk subunits to proton translocation. Functionally, component of the F(0) channel, it forms part of the peripheral stalk, linking F(1) to F(0). The sequence is that of ATP synthase subunit b, chloroplastic from Piper cenocladum (Ant piper).